A 315-amino-acid chain; its full sequence is Acetyl-coenzyme A carboxylase carboxyl transferase subunit alpha (315 aa).

One can recognise a CoA carboxyltransferase C-terminal domain in the interval 36-289; it reads LSKKRLELME…RKAVAAELKI (254 aa).

This sequence belongs to the AccA family. Acetyl-CoA carboxylase is a heterohexamer composed of biotin carboxyl carrier protein (AccB), biotin carboxylase (AccC) and two subunits each of ACCase subunit alpha (AccA) and ACCase subunit beta (AccD).

It is found in the cytoplasm. The catalysed reaction is N(6)-carboxybiotinyl-L-lysyl-[protein] + acetyl-CoA = N(6)-biotinyl-L-lysyl-[protein] + malonyl-CoA. The protein operates within lipid metabolism; malonyl-CoA biosynthesis; malonyl-CoA from acetyl-CoA: step 1/1. Its function is as follows. Component of the acetyl coenzyme A carboxylase (ACC) complex. First, biotin carboxylase catalyzes the carboxylation of biotin on its carrier protein (BCCP) and then the CO(2) group is transferred by the carboxyltransferase to acetyl-CoA to form malonyl-CoA. In Francisella tularensis subsp. holarctica (strain FTNF002-00 / FTA), this protein is Acetyl-coenzyme A carboxylase carboxyl transferase subunit alpha.